Reading from the N-terminus, the 195-residue chain is MSARPEPQPGSERNATEPLPSHLDPTTYPRTLTTTHGPTSIPLHLELTYHTLSPTTALQHVSSPSSGANILFLGTTRDTFDDRPVARLSYTSYPALALKSLHKISSEAVEKFGLNGVYIAHRLGEVPVGEASIVVAVGAGHRGEAWRGAEWVLEVVKERVEVWKREEFVDGGMEWRENRERDGFGKLKTKKEDSR.

The disordered stretch occupies residues 1-37; sequence MSARPEPQPGSERNATEPLPSHLDPTTYPRTLTTTHG. Positions 25–37 are enriched in low complexity; it reads PTTYPRTLTTTHG. Residues 141–142, lysine 157, and 164–166 contribute to the substrate site; these read HR and KRE.

The protein belongs to the MoaE family. MOCS2B subfamily. As to quaternary structure, heterotetramer; composed of 2 small (MOCS2A) and 2 large (MOCS2B) subunits.

Its subcellular location is the cytoplasm. It catalyses the reaction 2 [molybdopterin-synthase sulfur-carrier protein]-C-terminal-Gly-aminoethanethioate + cyclic pyranopterin phosphate + H2O = molybdopterin + 2 [molybdopterin-synthase sulfur-carrier protein]-C-terminal Gly-Gly + 2 H(+). Its pathway is cofactor biosynthesis; molybdopterin biosynthesis. Its function is as follows. Catalytic subunit of the molybdopterin synthase complex, a complex that catalyzes the conversion of precursor Z into molybdopterin. Acts by mediating the incorporation of 2 sulfur atoms from thiocarboxylated MOCS2A into precursor Z to generate a dithiolene group. The polypeptide is Molybdopterin synthase catalytic subunit (Emericella nidulans (strain FGSC A4 / ATCC 38163 / CBS 112.46 / NRRL 194 / M139) (Aspergillus nidulans)).